Here is a 196-residue protein sequence, read N- to C-terminus: Pyridoxal 5'-phosphate synthase subunit PdxT (196 aa).

Position 47-49 (47-49 (GES)) interacts with L-glutamine. Cys79 functions as the Nucleophile in the catalytic mechanism. L-glutamine contacts are provided by residues Arg106 and 134-135 (IR). Catalysis depends on charge relay system residues His170 and Glu172.

This sequence belongs to the glutaminase PdxT/SNO family. In the presence of PdxS, forms a dodecamer of heterodimers. Only shows activity in the heterodimer.

It carries out the reaction aldehydo-D-ribose 5-phosphate + D-glyceraldehyde 3-phosphate + L-glutamine = pyridoxal 5'-phosphate + L-glutamate + phosphate + 3 H2O + H(+). It catalyses the reaction L-glutamine + H2O = L-glutamate + NH4(+). It functions in the pathway cofactor biosynthesis; pyridoxal 5'-phosphate biosynthesis. Catalyzes the hydrolysis of glutamine to glutamate and ammonia as part of the biosynthesis of pyridoxal 5'-phosphate. The resulting ammonia molecule is channeled to the active site of PdxS. The polypeptide is Pyridoxal 5'-phosphate synthase subunit PdxT (Bacillus cereus (strain B4264)).